The primary structure comprises 241 residues: 2,3,4,5-tetrahydropyridine-2,6-dicarboxylate N-acetyltransferase (241 aa).

The protein belongs to the transferase hexapeptide repeat family. DapH subfamily.

It catalyses the reaction (S)-2,3,4,5-tetrahydrodipicolinate + acetyl-CoA + H2O = L-2-acetamido-6-oxoheptanedioate + CoA. Its pathway is amino-acid biosynthesis; L-lysine biosynthesis via DAP pathway; LL-2,6-diaminopimelate from (S)-tetrahydrodipicolinate (acetylase route): step 1/3. Its function is as follows. Catalyzes the transfer of an acetyl group from acetyl-CoA to tetrahydrodipicolinate. In Thermoanaerobacter sp. (strain X514), this protein is 2,3,4,5-tetrahydropyridine-2,6-dicarboxylate N-acetyltransferase.